A 306-amino-acid chain; its full sequence is Protease HtpX homolog (306 aa).

The next 2 helical transmembrane spans lie at 10–30 (TTLL…ATGG) and 33–53 (QTLS…YWFS). Residue His135 participates in Zn(2+) binding. Glu136 is an active-site residue. A Zn(2+)-binding site is contributed by His139. Helical transmembrane passes span 149-169 (AIAS…MYFG) and 181-201 (GLGL…ASLI). Zn(2+) is bound at residue Glu210.

Belongs to the peptidase M48B family. The cofactor is Zn(2+).

It localises to the cell membrane. In Bifidobacterium longum (strain NCC 2705), this protein is Protease HtpX homolog.